We begin with the raw amino-acid sequence, 227 residues long: Cytochrome c oxidase subunit 2 (227 aa).

Topologically, residues 1–14 (MAHPVQLSLQDATS) are mitochondrial intermembrane. A helical membrane pass occupies residues 15-45 (PVMEELITFHDHAFMAMSLISFLVLYALLST). The Mitochondrial matrix portion of the chain corresponds to 46–59 (LTTKLTNTSITDAQ). Residues 60–87 (EMETIWTILPAIILILIALPSLRILYLT) form a helical membrane-spanning segment. Residues 88-227 (DEVNDPSFTI…IFEMGPVLTL (140 aa)) lie on the Mitochondrial intermembrane side of the membrane. Cu cation-binding residues include His-161, Cys-196, Glu-198, Cys-200, His-204, and Met-207. Glu-198 is a binding site for Mg(2+).

Belongs to the cytochrome c oxidase subunit 2 family. As to quaternary structure, component of the cytochrome c oxidase (complex IV, CIV), a multisubunit enzyme composed of 14 subunits. The complex is composed of a catalytic core of 3 subunits MT-CO1, MT-CO2 and MT-CO3, encoded in the mitochondrial DNA, and 11 supernumerary subunits COX4I, COX5A, COX5B, COX6A, COX6B, COX6C, COX7A, COX7B, COX7C, COX8 and NDUFA4, which are encoded in the nuclear genome. The complex exists as a monomer or a dimer and forms supercomplexes (SCs) in the inner mitochondrial membrane with NADH-ubiquinone oxidoreductase (complex I, CI) and ubiquinol-cytochrome c oxidoreductase (cytochrome b-c1 complex, complex III, CIII), resulting in different assemblies (supercomplex SCI(1)III(2)IV(1) and megacomplex MCI(2)III(2)IV(2)). Found in a complex with TMEM177, COA6, COX18, COX20, SCO1 and SCO2. Interacts with TMEM177 in a COX20-dependent manner. Interacts with COX20. Interacts with COX16. Cu cation serves as cofactor.

It localises to the mitochondrion inner membrane. The catalysed reaction is 4 Fe(II)-[cytochrome c] + O2 + 8 H(+)(in) = 4 Fe(III)-[cytochrome c] + 2 H2O + 4 H(+)(out). Functionally, component of the cytochrome c oxidase, the last enzyme in the mitochondrial electron transport chain which drives oxidative phosphorylation. The respiratory chain contains 3 multisubunit complexes succinate dehydrogenase (complex II, CII), ubiquinol-cytochrome c oxidoreductase (cytochrome b-c1 complex, complex III, CIII) and cytochrome c oxidase (complex IV, CIV), that cooperate to transfer electrons derived from NADH and succinate to molecular oxygen, creating an electrochemical gradient over the inner membrane that drives transmembrane transport and the ATP synthase. Cytochrome c oxidase is the component of the respiratory chain that catalyzes the reduction of oxygen to water. Electrons originating from reduced cytochrome c in the intermembrane space (IMS) are transferred via the dinuclear copper A center (CU(A)) of subunit 2 and heme A of subunit 1 to the active site in subunit 1, a binuclear center (BNC) formed by heme A3 and copper B (CU(B)). The BNC reduces molecular oxygen to 2 water molecules using 4 electrons from cytochrome c in the IMS and 4 protons from the mitochondrial matrix. This Macaca mulatta (Rhesus macaque) protein is Cytochrome c oxidase subunit 2 (MT-CO2).